Reading from the N-terminus, the 165-residue chain is Putative defense protein Hdd11 (165 aa).

A signal peptide spans 1–17; it reads MWATYVFIAVSLACANG. The Reelin domain occupies 18 to 165; it reads YSSGAPESVC…VESGPVKVIS (148 aa). Residues Cys27 and Cys104 are joined by a disulfide bond.

It belongs to the insect defense protein family.

It is found in the secreted. In terms of biological role, as this protein is expressed upon bacterial infection, it may have antimicrobial activity. The chain is Putative defense protein Hdd11 from Hyphantria cunea (Fall webworm moth).